Reading from the N-terminus, the 399-residue chain is PCI domain-containing protein 2 (399 aa).

The 182-residue stretch at 210–391 folds into the PCI domain; the sequence is VTYKYYVGRK…QKLVVSKQNP (182 aa).

It belongs to the CSN12 family.

This is PCI domain-containing protein 2 (pcid2) from Danio rerio (Zebrafish).